We begin with the raw amino-acid sequence, 229 residues long: Protein-L-isoaspartate O-methyltransferase (229 aa).

Ser74 is a catalytic residue.

The protein belongs to the methyltransferase superfamily. L-isoaspartyl/D-aspartyl protein methyltransferase family.

It is found in the cytoplasm. It carries out the reaction [protein]-L-isoaspartate + S-adenosyl-L-methionine = [protein]-L-isoaspartate alpha-methyl ester + S-adenosyl-L-homocysteine. In terms of biological role, catalyzes the methyl esterification of L-isoaspartyl residues in peptides and proteins that result from spontaneous decomposition of normal L-aspartyl and L-asparaginyl residues. It plays a role in the repair and/or degradation of damaged proteins. This chain is Protein-L-isoaspartate O-methyltransferase, found in Pelotomaculum thermopropionicum (strain DSM 13744 / JCM 10971 / SI).